We begin with the raw amino-acid sequence, 646 residues long: Threonine--tRNA ligase (646 aa).

The TGS domain occupies 1 to 61 (MIKITFPDGS…NEDASVVLYK (61 aa)). Positions 242–541 (DHRKIGKEMQ…LIEHTAGKFP (300 aa)) are catalytic. Residues cysteine 337, histidine 388, and histidine 518 each coordinate Zn(2+).

Belongs to the class-II aminoacyl-tRNA synthetase family. As to quaternary structure, homodimer. It depends on Zn(2+) as a cofactor.

Its subcellular location is the cytoplasm. It catalyses the reaction tRNA(Thr) + L-threonine + ATP = L-threonyl-tRNA(Thr) + AMP + diphosphate + H(+). Functionally, catalyzes the attachment of threonine to tRNA(Thr) in a two-step reaction: L-threonine is first activated by ATP to form Thr-AMP and then transferred to the acceptor end of tRNA(Thr). Also edits incorrectly charged L-seryl-tRNA(Thr). This chain is Threonine--tRNA ligase, found in Bacteroides fragilis (strain YCH46).